Here is a 373-residue protein sequence, read N- to C-terminus: Homoserine O-acetyltransferase (373 aa).

Residues Asn-46 to Leu-355 enclose the AB hydrolase-1 domain. The Nucleophile role is filled by Ser-151. Position 221 (Arg-221) interacts with substrate. Catalysis depends on residues Asp-317 and His-350. Asp-351 serves as a coordination point for substrate.

The protein belongs to the AB hydrolase superfamily. MetX family. As to quaternary structure, homodimer.

It localises to the cytoplasm. It carries out the reaction L-homoserine + acetyl-CoA = O-acetyl-L-homoserine + CoA. Its pathway is amino-acid biosynthesis; L-methionine biosynthesis via de novo pathway; O-acetyl-L-homoserine from L-homoserine: step 1/1. In terms of biological role, transfers an acetyl group from acetyl-CoA to L-homoserine, forming acetyl-L-homoserine. The sequence is that of Homoserine O-acetyltransferase from Zymomonas mobilis subsp. mobilis (strain ATCC 31821 / ZM4 / CP4).